We begin with the raw amino-acid sequence, 79 residues long: Acyl carrier protein (79 aa).

One can recognise a Carrier domain in the interval 2 to 77; the sequence is SDIADKVKKI…DAIDYIEKQK (76 aa). The residue at position 37 (Ser37) is an O-(pantetheine 4'-phosphoryl)serine.

This sequence belongs to the acyl carrier protein (ACP) family. 4'-phosphopantetheine is transferred from CoA to a specific serine of apo-ACP by AcpS. This modification is essential for activity because fatty acids are bound in thioester linkage to the sulfhydryl of the prosthetic group.

Its subcellular location is the cytoplasm. The protein operates within lipid metabolism; fatty acid biosynthesis. Functionally, carrier of the growing fatty acid chain in fatty acid biosynthesis. In Gluconobacter oxydans (strain 621H) (Gluconobacter suboxydans), this protein is Acyl carrier protein.